Reading from the N-terminus, the 247-residue chain is DNA polymerase epsilon subunit D (247 aa).

The disordered stretch occupies residues 128 to 247 (KKHKADKKVP…EGQNSSDDDS (120 aa)). The span at 150–159 (RLKDNDEQII) shows a compositional bias: basic and acidic residues. Composition is skewed to acidic residues over residues 165 to 188 (ADME…NDED), 196 to 215 (EEEE…EVEE), and 224 to 247 (EEDE…DDDS).

As to quaternary structure, heterotetramer. Consists of four subunits: POL2, DPB2, DPB3 and DPB4.

It is found in the nucleus. Functionally, as accessory component of the DNA polymerase epsilon (DNA polymerase II) participates in chromosomal DNA replication. This chain is DNA polymerase epsilon subunit D (DPB4), found in Debaryomyces hansenii (strain ATCC 36239 / CBS 767 / BCRC 21394 / JCM 1990 / NBRC 0083 / IGC 2968) (Yeast).